Here is a 303-residue protein sequence, read N- to C-terminus: Putative S-adenosyl-L-methionine-dependent methyltransferase ML2020 (303 aa).

Residues Asp-130 and Asp-159–Leu-160 each bind S-adenosyl-L-methionine.

Belongs to the UPF0677 family.

Its function is as follows. Exhibits S-adenosyl-L-methionine-dependent methyltransferase activity. In Mycobacterium leprae (strain TN), this protein is Putative S-adenosyl-L-methionine-dependent methyltransferase ML2020.